Reading from the N-terminus, the 302-residue chain is S-crystallin SL4 (302 aa).

3 consecutive repeat copies span residues 45–54 (GGYAVQSRGD), 55–64 (GGYYVKSRGD), and 65–74 (GGYPVQGRGD). Positions 45–84 (GGYAVQSRGDGGYYVKSRGDGGYPVQGRGDTGYSSQTRSD) are 4 X approximate tandem repeats of G-G-Y-[AYP]-V-[QK]-[SG]-R-G-D. 3 short sequence motifs (cell attachment site) span residues 52–54 (RGD), 62–64 (RGD), and 72–74 (RGD). Residues 68–92 (PVQGRGDTGYSSQTRSDDACLGQGR) are disordered. Residues 75–84 (TGYSSQTRSD) form a 4; approximate repeat. Positions 113-115 (RGD) match the Cell attachment site motif. The tract at residues 118–205 (SDINSGLYSG…ESASRRSRNH (88 aa)) is disordered. Composition is skewed to basic and acidic residues over residues 129–166 (RMDDSCHTSESRRMDDPCGTDESRRLDVPCHSDDHYRS) and 177–192 (AEDRRGGHSDSHRIDI). Residues 183 to 302 (GHSDSHRIDI…YIKRRYQSDF (120 aa)) form the GST C-terminal domain.

It belongs to the GST superfamily.

Functionally, S-crystallins are structural components of squids and octopi eye lens. This Nototodarus sloanii (Wellington flying squid) protein is S-crystallin SL4.